Consider the following 337-residue polypeptide: Phosphate acyltransferase (337 aa).

Belongs to the PlsX family. In terms of assembly, homodimer. Probably interacts with PlsY.

It is found in the cytoplasm. The catalysed reaction is a fatty acyl-[ACP] + phosphate = an acyl phosphate + holo-[ACP]. Its pathway is lipid metabolism; phospholipid metabolism. Its function is as follows. Catalyzes the reversible formation of acyl-phosphate (acyl-PO(4)) from acyl-[acyl-carrier-protein] (acyl-ACP). This enzyme utilizes acyl-ACP as fatty acyl donor, but not acyl-CoA. The polypeptide is Phosphate acyltransferase (Hydrogenovibrio crunogenus (strain DSM 25203 / XCL-2) (Thiomicrospira crunogena)).